The following is a 206-amino-acid chain: Small ribosomal subunit protein uS4 (206 aa).

Positions 96–156 constitute an S4 RNA-binding domain; that stretch reads GRLDNVVYRM…EKAKKQARIK (61 aa).

This sequence belongs to the universal ribosomal protein uS4 family. As to quaternary structure, part of the 30S ribosomal subunit. Contacts protein S5. The interaction surface between S4 and S5 is involved in control of translational fidelity.

In terms of biological role, one of the primary rRNA binding proteins, it binds directly to 16S rRNA where it nucleates assembly of the body of the 30S subunit. With S5 and S12 plays an important role in translational accuracy. The polypeptide is Small ribosomal subunit protein uS4 (Aeromonas hydrophila subsp. hydrophila (strain ATCC 7966 / DSM 30187 / BCRC 13018 / CCUG 14551 / JCM 1027 / KCTC 2358 / NCIMB 9240 / NCTC 8049)).